The primary structure comprises 498 residues: Histone-lysine N-methyltransferase SET5 (498 aa).

The tract at residues 68-94 is disordered; it reads KPNDGCTSRSTSCPGGKKKKKSKTDTS. In terms of domain architecture, SET spans 108–415; that stretch reads AGIRGVYFDP…PDDELVISYI (308 aa).

This sequence belongs to the class V-like SAM-binding methyltransferase superfamily. Histone-lysine methyltransferase family. SET5 subfamily.

It localises to the nucleus. Its subcellular location is the chromosome. The protein localises to the cytoplasm. It carries out the reaction L-lysyl-[histone] + S-adenosyl-L-methionine = N(6)-methyl-L-lysyl-[histone] + S-adenosyl-L-homocysteine + H(+). Functionally, histone methyltransferase that monomethylates 'Lys-5', 'Lys-8' and 'Lys-12' of histone H4 (H4K5me1, H4K8me1 and H4K12me1, respectively), thereby controlling gene expression and remodeling chromatin structures. This chain is Histone-lysine N-methyltransferase SET5 (SET5), found in Mycosarcoma maydis (Corn smut fungus).